The primary structure comprises 590 residues: Aspartate--tRNA ligase (590 aa).

Residue glutamate 175 coordinates L-aspartate. Residues 199 to 202 (QIFK) are aspartate. Position 221 (arginine 221) interacts with L-aspartate. Residues 221–223 (RDE) and glutamine 230 each bind ATP. Histidine 449 contributes to the L-aspartate binding site. Glutamate 483 is an ATP binding site. Arginine 490 lines the L-aspartate pocket. 535 to 538 (GLDR) lines the ATP pocket.

This sequence belongs to the class-II aminoacyl-tRNA synthetase family. Type 1 subfamily. As to quaternary structure, homodimer.

It is found in the cytoplasm. The catalysed reaction is tRNA(Asp) + L-aspartate + ATP = L-aspartyl-tRNA(Asp) + AMP + diphosphate. Catalyzes the attachment of L-aspartate to tRNA(Asp) in a two-step reaction: L-aspartate is first activated by ATP to form Asp-AMP and then transferred to the acceptor end of tRNA(Asp). This is Aspartate--tRNA ligase from Geobacillus kaustophilus (strain HTA426).